Here is a 245-residue protein sequence, read N- to C-terminus: DNA polymerase sliding clamp (245 aa).

It belongs to the PCNA family. In terms of assembly, homotrimer. The subunits circularize to form a toroid; DNA passes through its center. Replication factor C (RFC) is required to load the toroid on the DNA.

Its function is as follows. Sliding clamp subunit that acts as a moving platform for DNA processing. Responsible for tethering the catalytic subunit of DNA polymerase and other proteins to DNA during high-speed replication. The polypeptide is DNA polymerase sliding clamp (Methanosarcina mazei (strain ATCC BAA-159 / DSM 3647 / Goe1 / Go1 / JCM 11833 / OCM 88) (Methanosarcina frisia)).